A 336-amino-acid polypeptide reads, in one-letter code: Holliday junction branch migration complex subunit RuvB (336 aa).

The interval 1–175 (MEKYSFESVQ…FGMSFRLQFY (175 aa)) is large ATPase domain (RuvB-L). ATP-binding positions include L14, R15, G56, K59, T60, T61, 122-124 (EDF), R165, Y175, and R212. Mg(2+) is bound at residue T60. The small ATPAse domain (RuvB-S) stretch occupies residues 176–253 (EPKELSAIVI…CVRYALNELG (78 aa)). Residues 256 to 336 (ELGFDELDLR…IPFLEQKGLF (81 aa)) form a head domain (RuvB-H) region. R310 and R315 together coordinate DNA.

It belongs to the RuvB family. As to quaternary structure, homohexamer. Forms an RuvA(8)-RuvB(12)-Holliday junction (HJ) complex. HJ DNA is sandwiched between 2 RuvA tetramers; dsDNA enters through RuvA and exits via RuvB. An RuvB hexamer assembles on each DNA strand where it exits the tetramer. Each RuvB hexamer is contacted by two RuvA subunits (via domain III) on 2 adjacent RuvB subunits; this complex drives branch migration. In the full resolvosome a probable DNA-RuvA(4)-RuvB(12)-RuvC(2) complex forms which resolves the HJ.

The protein resides in the cytoplasm. It carries out the reaction ATP + H2O = ADP + phosphate + H(+). Its function is as follows. The RuvA-RuvB-RuvC complex processes Holliday junction (HJ) DNA during genetic recombination and DNA repair, while the RuvA-RuvB complex plays an important role in the rescue of blocked DNA replication forks via replication fork reversal (RFR). RuvA specifically binds to HJ cruciform DNA, conferring on it an open structure. The RuvB hexamer acts as an ATP-dependent pump, pulling dsDNA into and through the RuvAB complex. RuvB forms 2 homohexamers on either side of HJ DNA bound by 1 or 2 RuvA tetramers; 4 subunits per hexamer contact DNA at a time. Coordinated motions by a converter formed by DNA-disengaged RuvB subunits stimulates ATP hydrolysis and nucleotide exchange. Immobilization of the converter enables RuvB to convert the ATP-contained energy into a lever motion, pulling 2 nucleotides of DNA out of the RuvA tetramer per ATP hydrolyzed, thus driving DNA branch migration. The RuvB motors rotate together with the DNA substrate, which together with the progressing nucleotide cycle form the mechanistic basis for DNA recombination by continuous HJ branch migration. Branch migration allows RuvC to scan DNA until it finds its consensus sequence, where it cleaves and resolves cruciform DNA. This is Holliday junction branch migration complex subunit RuvB from Helicobacter hepaticus (strain ATCC 51449 / 3B1).